We begin with the raw amino-acid sequence, 86 residues long: Antifungal protein 2 (86 aa).

An N-terminal signal peptide occupies residues 1 to 21 (MHLSTALFSAIALLAATQVIG). 3 disulfides stabilise this stretch: Cys43/Cys57, Cys45/Cys74, and Cys49/Cys83. Residues 44-54 (NCPNNCKHKKG) are lipid-binding. The Gamma-core motif lies at 72 to 83 (GKCEWQGGQLNC).

The protein localises to the secreted. Cysteine-rich antifungal protein highly effective against yeasts such as clinically relevant Candida species, including the multidrug-resistant pathogen Candida auris. Does not cause metabolic inactivity and apoptosis induction, but the fungal cell-killing activity is connected to its pore-forming ability in the cell membrane. NFAP2 has a low potential to trigger resistance in C.albicans in vitro, and the developed tolerance to NFAP2 is not associated with severe phenotypic changes compared with development of resistance to generic fluconazole. The polypeptide is Antifungal protein 2 (Neosartorya fischeri (strain ATCC 1020 / DSM 3700 / CBS 544.65 / FGSC A1164 / JCM 1740 / NRRL 181 / WB 181) (Aspergillus fischerianus)).